A 275-amino-acid polypeptide reads, in one-letter code: Formamidopyrimidine-DNA glycosylase (275 aa).

Proline 2 functions as the Schiff-base intermediate with DNA in the catalytic mechanism. Catalysis depends on glutamate 3, which acts as the Proton donor. The active-site Proton donor; for beta-elimination activity is the lysine 58. Positions 89, 108, and 151 each coordinate DNA. Residues 236–275 (KVYDRAGQPCERCPGPAACAGISRTVQSGRATYFCARTQK) form an FPG-type; degenerate zinc finger. The active-site Proton donor; for delta-elimination activity is the arginine 265.

The protein belongs to the FPG family. As to quaternary structure, monomer. Zn(2+) serves as cofactor.

The enzyme catalyses Hydrolysis of DNA containing ring-opened 7-methylguanine residues, releasing 2,6-diamino-4-hydroxy-5-(N-methyl)formamidopyrimidine.. It catalyses the reaction 2'-deoxyribonucleotide-(2'-deoxyribose 5'-phosphate)-2'-deoxyribonucleotide-DNA = a 3'-end 2'-deoxyribonucleotide-(2,3-dehydro-2,3-deoxyribose 5'-phosphate)-DNA + a 5'-end 5'-phospho-2'-deoxyribonucleoside-DNA + H(+). In terms of biological role, involved in base excision repair of DNA damaged by oxidation or by mutagenic agents. Acts as a DNA glycosylase that recognizes and removes damaged bases. Has a preference for oxidized purines, such as 7,8-dihydro-8-oxoguanine (8-oxoG). Has AP (apurinic/apyrimidinic) lyase activity and introduces nicks in the DNA strand. Cleaves the DNA backbone by beta-delta elimination to generate a single-strand break at the site of the removed base with both 3'- and 5'-phosphates. In Acidiphilium cryptum (strain JF-5), this protein is Formamidopyrimidine-DNA glycosylase.